Consider the following 412-residue polypeptide: NADH-quinone oxidoreductase subunit D (412 aa).

The protein belongs to the complex I 49 kDa subunit family. NDH-1 is composed of 14 different subunits. Subunits NuoB, C, D, E, F, and G constitute the peripheral sector of the complex.

The protein resides in the cell inner membrane. The catalysed reaction is a quinone + NADH + 5 H(+)(in) = a quinol + NAD(+) + 4 H(+)(out). Its function is as follows. NDH-1 shuttles electrons from NADH, via FMN and iron-sulfur (Fe-S) centers, to quinones in the respiratory chain. The immediate electron acceptor for the enzyme in this species is believed to be a menaquinone. Couples the redox reaction to proton translocation (for every two electrons transferred, four hydrogen ions are translocated across the cytoplasmic membrane), and thus conserves the redox energy in a proton gradient. The polypeptide is NADH-quinone oxidoreductase subunit D (Flavobacterium johnsoniae (strain ATCC 17061 / DSM 2064 / JCM 8514 / BCRC 14874 / CCUG 350202 / NBRC 14942 / NCIMB 11054 / UW101) (Cytophaga johnsonae)).